Consider the following 207-residue polypeptide: Cytochrome c biogenesis ATP-binding export protein CcmA (207 aa).

Residues 4-207 (LEVRELLCER…RISLTQTRAV (204 aa)) enclose the ABC transporter domain. 36-43 (GSNGAGKT) contributes to the ATP binding site.

This sequence belongs to the ABC transporter superfamily. CcmA exporter (TC 3.A.1.107) family. In terms of assembly, the complex is composed of two ATP-binding proteins (CcmA) and two transmembrane proteins (CcmB).

It localises to the cell inner membrane. The catalysed reaction is heme b(in) + ATP + H2O = heme b(out) + ADP + phosphate + H(+). In terms of biological role, part of the ABC transporter complex CcmAB involved in the biogenesis of c-type cytochromes; once thought to export heme, this seems not to be the case, but its exact role is uncertain. Responsible for energy coupling to the transport system. This is Cytochrome c biogenesis ATP-binding export protein CcmA from Shigella dysenteriae serotype 1 (strain Sd197).